Consider the following 314-residue polypeptide: Lipoyl synthase (314 aa).

Residues 1 to 24 are disordered; it reads MMDTPIIRHPEKVRRPDNPSPRKP. [4Fe-4S] cluster is bound by residues Cys-53, Cys-58, Cys-64, Cys-79, Cys-83, Cys-86, and Ser-293. Residues 65–282 enclose the Radical SAM core domain; that stretch reads WKRRHATFMI…ADIARGKGFL (218 aa). Over residues 294–308 the composition is skewed to basic and acidic residues; the sequence is HHADRDFEDLRKARQ. Positions 294–314 are disordered; sequence HHADRDFEDLRKARQDAAATK.

This sequence belongs to the radical SAM superfamily. Lipoyl synthase family. The cofactor is [4Fe-4S] cluster.

Its subcellular location is the cytoplasm. The enzyme catalyses [[Fe-S] cluster scaffold protein carrying a second [4Fe-4S](2+) cluster] + N(6)-octanoyl-L-lysyl-[protein] + 2 oxidized [2Fe-2S]-[ferredoxin] + 2 S-adenosyl-L-methionine + 4 H(+) = [[Fe-S] cluster scaffold protein] + N(6)-[(R)-dihydrolipoyl]-L-lysyl-[protein] + 4 Fe(3+) + 2 hydrogen sulfide + 2 5'-deoxyadenosine + 2 L-methionine + 2 reduced [2Fe-2S]-[ferredoxin]. The protein operates within protein modification; protein lipoylation via endogenous pathway; protein N(6)-(lipoyl)lysine from octanoyl-[acyl-carrier-protein]: step 2/2. Its function is as follows. Catalyzes the radical-mediated insertion of two sulfur atoms into the C-6 and C-8 positions of the octanoyl moiety bound to the lipoyl domains of lipoate-dependent enzymes, thereby converting the octanoylated domains into lipoylated derivatives. In Rhodospirillum rubrum (strain ATCC 11170 / ATH 1.1.1 / DSM 467 / LMG 4362 / NCIMB 8255 / S1), this protein is Lipoyl synthase.